Reading from the N-terminus, the 525-residue chain is G patch domain-containing protein 3 (525 aa).

Residues 264–316 (YLADIPASPCGEPEEEVGKEEEEESHSDEDDDRGEEWERHEALHEDVTGQERT) are disordered. Acidic residues predominate over residues 275 to 298 (EPEEEVGKEEEEESHSDEDDDRGE). Positions 299–316 (EWERHEALHEDVTGQERT) are enriched in basic and acidic residues. Positions 410–458 (TKGIGRKVMERQGWAEGQGLGCRCSGVPEALDSDGQHPRCKRGLGYHGE) constitute a G-patch domain.

Interacts with mitochondrial MAVS; the interaction is markedly increased upon viral infection. Expressed in ocular tissues including retinal pigment epithelium, cornea, ciliary muscle and non-pigmented ciliary epithelium. Also expressed in optic nerve, cartilage, skin and lymph node.

It localises to the nucleus. The protein resides in the cytoplasm. In terms of biological role, involved in transcriptional regulation. It is able to activate transcription from the CXCR4 promoter and therefore it might control neural crest cell migration involved in ocular and craniofacial development. Is a negative regulator of immune antiviral response, acting via down-regulation of RIG-I-like receptors signaling and inhibition of type I interferon production. The control mechanism involves interaction with mitochondrial MAVS and inhibition of MAVS assembly with downstream proteins implicated in antiviral response, such as TBK1 and TRAF6. The protein is G patch domain-containing protein 3 (GPATCH3) of Homo sapiens (Human).